We begin with the raw amino-acid sequence, 251 residues long: Ribonuclease PH (251 aa).

Residues Arg-90 and 128–130 contribute to the phosphate site; that span reads GTR.

It belongs to the RNase PH family. Homohexameric ring arranged as a trimer of dimers.

The catalysed reaction is tRNA(n+1) + phosphate = tRNA(n) + a ribonucleoside 5'-diphosphate. Functionally, phosphorolytic 3'-5' exoribonuclease that plays an important role in tRNA 3'-end maturation. Removes nucleotide residues following the 3'-CCA terminus of tRNAs; can also add nucleotides to the ends of RNA molecules by using nucleoside diphosphates as substrates, but this may not be physiologically important. Probably plays a role in initiation of 16S rRNA degradation (leading to ribosome degradation) during starvation. The chain is Ribonuclease PH from Leifsonia xyli subsp. xyli (strain CTCB07).